Consider the following 104-residue polypeptide: Small ribosomal subunit protein uS10 (104 aa).

The protein belongs to the universal ribosomal protein uS10 family. As to quaternary structure, part of the 30S ribosomal subunit.

In terms of biological role, involved in the binding of tRNA to the ribosomes. The chain is Small ribosomal subunit protein uS10 from Aquifex aeolicus (strain VF5).